The following is a 170-amino-acid chain: dCTP pyrophosphatase 1 (170 aa).

A disordered region spans residues 1-27; the sequence is MSVAGGEIRGDTGGEDTAAPGRFSFSP. Ser-2 bears the N-acetylserine mark. Ser-2 is subject to Phosphoserine. Position 12 is a phosphothreonine (Thr-12). Substrate contacts are provided by residues His-38 and 47 to 51; that span reads WEQFH. Mg(2+)-binding residues include Glu-63 and Glu-66. Trp-73 contributes to the substrate binding site. Residue Ser-85 is modified to Phosphoserine. The Mg(2+) site is built by Glu-95 and Asp-98. Tyr-102 contacts substrate. The tract at residues 147 to 170 is disordered; that stretch reads GAISEDQAVGPADIPCDSTGQTST.

Homotetramer. Mg(2+) is required as a cofactor.

The protein resides in the mitochondrion. The protein localises to the nucleus. Its subcellular location is the cytoplasm. It localises to the cytosol. The catalysed reaction is dCTP + H2O = dCMP + diphosphate + H(+). Inhibited by the reaction end product PPi. Inhibited by dCDP. Inhibited by triptolide. Its function is as follows. Hydrolyzes deoxynucleoside triphosphates (dNTPs) to the corresponding nucleoside monophosphates. Has a strong preference for dCTP and its analogs including 5-iodo-dCTP and 5-methyl-dCTP for which it may even have a higher efficiency. May protect DNA or RNA against the incorporation of these genotoxic nucleotide analogs through their catabolism. The sequence is that of dCTP pyrophosphatase 1 from Homo sapiens (Human).